The sequence spans 634 residues: Glutathione S-transferase C-terminal domain-containing protein (634 aa).

The region spanning 131-333 (LGFKKTCLKA…QEVPKVKTAA (203 aa)) is the GST C-terminal domain. The disordered stretch occupies residues 189 to 233 (RVHNDDKLRRQKLKQQKAAGSEPPSGKGKAKSKASAQKTPKDLAA). Over residues 204–226 (QKAAGSEPPSGKGKAKSKASAQK) the composition is skewed to low complexity.

It belongs to the GSTCD family.

Its subcellular location is the cytoplasm. This Mus musculus (Mouse) protein is Glutathione S-transferase C-terminal domain-containing protein (Gstcd).